Here is a 220-residue protein sequence, read N- to C-terminus: Histone H1B (220 aa).

Disordered stretches follow at residues 1 to 45 and 99 to 220; these read MTAT…PSAS and QVKG…APKK. Over residues 28 to 45 the composition is skewed to low complexity; that stretch reads KKVAGGAKAKKPSGPSAS. One can recognise an H15 domain in the interval 40–113; that stretch reads SGPSASELIV…GASGSFKLNK (74 aa). Composition is skewed to basic residues over residues 122-134, 141-151, 158-196, and 204-220; these read AAKK…KAKK, KAPKSPKKPKK, SPKK…KPKT, and KVAK…APKK.

It belongs to the histone H1/H5 family.

The protein resides in the nucleus. Its subcellular location is the chromosome. Its function is as follows. Histones H1 are necessary for the condensation of nucleosome chains into higher-order structures. The chain is Histone H1B from Xenopus laevis (African clawed frog).